Consider the following 71-residue polypeptide: Hainantoxin-X-2 (71 aa).

A signal peptide spans 1–26; the sequence is MKTAIFTVVLALAVFAVLCLVVSTHA. A propeptide spanning residues 27–43 is cleaved from the precursor; it reads ERHSKTDMEDSPMIQER. 2 cysteine pairs are disulfide-bonded: cysteine 52/cysteine 65 and cysteine 61/cysteine 70.

This sequence belongs to the neurotoxin 36 family. 02 subfamily. Expressed by the venom gland.

Its subcellular location is the secreted. Reversibly blocks N-type calcium channels (Cav2.2/CACNA1B) in rat dorsal root ganglion cells. Elicits no toxic symptoms in either vertebrates or invertebrates during a period of 48 hours post-injection, when it was assayed in vivo by direct injection into mice and cockroaches. The protein is Hainantoxin-X-2 of Cyriopagopus hainanus (Chinese bird spider).